We begin with the raw amino-acid sequence, 151 residues long: Copper transporter 2 (151 aa).

Helical transmembrane passes span 42–62 (GARGGMYALAILFMFALAVLL) and 97–117 (VAYLIMLALMSFNGGVFLAIV).

Belongs to the copper transporter (Ctr) (TC 1.A.56) family. SLC31A subfamily. As to quaternary structure, self-interacts. Interacts with SWEET11 and COPT1.

Its subcellular location is the cell membrane. In terms of biological role, involved in the transport of copper, in cooperation with SWEET11 and COPT1. Contributes to the removal of copper (Cu) from xylem, and thus to the sensitivity toward bacterial pathogens such as X.oryzae pv. oryzae (Xoo). The chain is Copper transporter 2 (COPT2) from Oryza sativa subsp. japonica (Rice).